The sequence spans 124 residues: Fluoride-specific ion channel FluC (124 aa).

A run of 4 helical transmembrane segments spans residues 4 to 24 (VLYI…LSGW), 32 to 52 (AFPY…GLIM), 67 to 87 (IGLT…SYET), and 101 to 121 (ANVL…IIVA). Residues G75 and T78 each coordinate Na(+).

It belongs to the fluoride channel Fluc/FEX (TC 1.A.43) family.

The protein localises to the cell inner membrane. The enzyme catalyses fluoride(in) = fluoride(out). Na(+) is not transported, but it plays an essential structural role and its presence is essential for fluoride channel function. Its function is as follows. Fluoride-specific ion channel. Important for reducing fluoride concentration in the cell, thus reducing its toxicity. The chain is Fluoride-specific ion channel FluC from Geotalea uraniireducens (strain Rf4) (Geobacter uraniireducens).